The following is a 504-amino-acid chain: WD repeat-containing protein 55 homolog (504 aa).

Disordered regions lie at residues 1–21 (MDRHEHFKAPANEDELDDIDD) and 33–132 (QEVL…DDDD). Composition is skewed to acidic residues over residues 12–21 (NEDELDDIDD) and 33–48 (QEVLNESESDDDEYDL). The segment covering 63–74 (SSSNESISSDGS) has biased composition (low complexity). Residues 78 to 89 (NAEDSDSDDSMI) show a composition bias toward acidic residues. WD repeat units follow at residues 156 to 195 (KLEDFITDICFHPDRDIIALATIIGDVHLYEYGNEENKLL), 200 to 239 (VHAKACRDVEFTEDGRSLITCSKDKCVMVTDMETEKLKKL), 243 to 281 (AHDDAINKLHVLDERLFATGDDAGTVKLWDFRTKDAIFE), 284 to 323 (EVEDQITQMLTNEQNKLLLATSADGYLTTYNIGARKLYVQ), 326 to 365 (PYEEELNCMGIYRGSSKLVAGTSKGRLYTYNWGYFGYHCD), and 410 to 449 (QHNMPIESLDINCSGELLASSSHNNDVRFWNVKYFEDFGD). Residues 477-504 (FFADMTKDQDDDDNDGGNDTAAGPSNVT) are disordered.

It belongs to the WD repeat WDR55 family.

The protein is WD repeat-containing protein 55 homolog of Drosophila virilis (Fruit fly).